The chain runs to 172 residues: RNA silencing suppressor p19 (172 aa).

Residues 1–20 (MERAIQGNDAREQANSERWD) show a composition bias toward basic and acidic residues. The segment at 1–38 (MERAIQGNDAREQANSERWDGGSGGTTSPFKLPDESPS) is disordered.

The protein belongs to the tombusviruses protein p19 family. As to quaternary structure, homodimer.

Functionally, acts as a suppressor of RNA-mediated gene silencing, also known as post-transcriptional gene silencing (PTGS), a mechanism of plant viral defense that limits the accumulation of viral RNAs. Binds to short interfering RNAs (siRNAs) with high affinity. Acts as a molecular caliper to specifically select siRNAs based on the length of the duplex region of the RNA. In Capsicum annuum (Capsicum pepper), this protein is RNA silencing suppressor p19.